We begin with the raw amino-acid sequence, 314 residues long: Malate dehydrogenase (314 aa).

NAD(+) contacts are provided by residues 11–16 (GSGNIG) and Asp-35. 2 residues coordinate substrate: Arg-84 and Arg-90. NAD(+) contacts are provided by residues Asn-97 and 120 to 122 (ITN). Substrate contacts are provided by Asn-122 and Arg-153. His-177 acts as the Proton acceptor in catalysis.

It belongs to the LDH/MDH superfamily. MDH type 3 family.

The catalysed reaction is (S)-malate + NAD(+) = oxaloacetate + NADH + H(+). Functionally, catalyzes the reversible oxidation of malate to oxaloacetate. The sequence is that of Malate dehydrogenase from Rickettsia conorii (strain ATCC VR-613 / Malish 7).